We begin with the raw amino-acid sequence, 258 residues long: Small ribosomal subunit protein uS2 (258 aa).

A disordered region spans residues 234 to 258; the sequence is ETANAEEAMQKAAAVEAAAEAAPAQ. Low complexity predominate over residues 236-258; sequence ANAEEAMQKAAAVEAAAEAAPAQ.

It belongs to the universal ribosomal protein uS2 family.

The polypeptide is Small ribosomal subunit protein uS2 (Desulfovibrio desulfuricans (strain ATCC 27774 / DSM 6949 / MB)).